We begin with the raw amino-acid sequence, 264 residues long: 3-methyl-2-oxobutanoate hydroxymethyltransferase (264 aa).

Mg(2+) is bound by residues Asp-45 and Asp-84. Residues 45–46 (DS), Asp-84, and Lys-112 each bind 3-methyl-2-oxobutanoate. A Mg(2+)-binding site is contributed by Glu-114. The active-site Proton acceptor is Glu-181.

The protein belongs to the PanB family. As to quaternary structure, homodecamer; pentamer of dimers. Requires Mg(2+) as cofactor.

The protein resides in the cytoplasm. The catalysed reaction is 3-methyl-2-oxobutanoate + (6R)-5,10-methylene-5,6,7,8-tetrahydrofolate + H2O = 2-dehydropantoate + (6S)-5,6,7,8-tetrahydrofolate. It functions in the pathway cofactor biosynthesis; (R)-pantothenate biosynthesis; (R)-pantoate from 3-methyl-2-oxobutanoate: step 1/2. In terms of biological role, catalyzes the reversible reaction in which hydroxymethyl group from 5,10-methylenetetrahydrofolate is transferred onto alpha-ketoisovalerate to form ketopantoate. The polypeptide is 3-methyl-2-oxobutanoate hydroxymethyltransferase (Aliivibrio fischeri (strain MJ11) (Vibrio fischeri)).